The primary structure comprises 343 residues: MSFSPQEALHRTIEHGEIFFDEMVDLMRQIMRGDVSPMMTAAILTGLRVKKETVDEIAAAATVMREFARPVPVADTSNLVDIVGTGGDGSHTFNISTCAMFVAAAAGARVAKHGNRSVSSKSGSADALEALGAVIELQPDQVAAAIDRTGIGFMFAPIHHPSMKVVAPVRREMGVRTIFNILGPLTNPASAPSVLMGVFHPDLVGIQARVLRELGTERAMVVWGRDNMDEISLGAGTLVGELRDGKVREYEIHPEDFGIAMSASRNLRVDGPEQSIQMLRAVLDNEPGPALDIVALNAGAALYVAGVASDIGDGLARARAAIANGSARQRLQQYVETTRALVA.

5-phospho-alpha-D-ribose 1-diphosphate contacts are provided by residues glycine 84, 87–88 (GD), threonine 92, 94–97 (NIST), 112–120 (KHGNRSVSS), and serine 124. Glycine 84 provides a ligand contact to anthranilate. Serine 96 is a Mg(2+) binding site. Asparagine 115 contributes to the anthranilate binding site. Arginine 170 contributes to the anthranilate binding site. Positions 229 and 230 each coordinate Mg(2+).

It belongs to the anthranilate phosphoribosyltransferase family. In terms of assembly, homodimer. Requires Mg(2+) as cofactor.

It carries out the reaction N-(5-phospho-beta-D-ribosyl)anthranilate + diphosphate = 5-phospho-alpha-D-ribose 1-diphosphate + anthranilate. Its pathway is amino-acid biosynthesis; L-tryptophan biosynthesis; L-tryptophan from chorismate: step 2/5. Its function is as follows. Catalyzes the transfer of the phosphoribosyl group of 5-phosphorylribose-1-pyrophosphate (PRPP) to anthranilate to yield N-(5'-phosphoribosyl)-anthranilate (PRA). The chain is Anthranilate phosphoribosyltransferase from Stenotrophomonas maltophilia (strain K279a).